Consider the following 578-residue polypeptide: MCGILAVLGCVDNSQAKRSRIIELSRRLRHRGPDWSGLHCYEDCYLAHERLAIVDPTSGDQPLYNEDKTIAVTVNGEIYNHKALRENLKSHQFRTGSDCEVIAHLYEEHGEEFVDMLDGMFAFVLLDTRDKSFIAARDAIGITPLYIGWGLDGSVWFASEMKALSDDCEQFMCFPPGHIYSSKQGGLRRWYNPPWFSEVVPSTPYDPLVVRNTFEKAVIKRLMTDVPFGVLLSGGLDSSLVASVALRHLEKSEAACQWGSKLHTFCIGLKGSPDLKAGREVADYLGTRHHELHFTVQDGIDAIEEVIYHVETYDVTTIRASTPMFLMSRKIKSLGVKMVLSGEGSDEIFGGYLYFHKAPNKKEFHEETCRKIKALHQYDCLRANKSTSAWGVEARVPFLDKEFINVAMSIDPEWKMIRPDLGRIEKWVLRNAFDDEKNPYLPKHILYRQKEQFSDGVGYSWIDGLKDHANKHVSETMLMNASFVFPDNTPLTKEAYYYRTIFEKFFPKSAARATVPGGPSVACSTAKAVEWDAAWSQNLDPSGRAALGVHVSAYGEDKTEDSRPEKLQKLAEKTPAIV.

Catalysis depends on cysteine 2, which acts as the For GATase activity. Residues 2 to 185 (CGILAVLGCV…PGHIYSSKQG (184 aa)) form the Glutamine amidotransferase type-2 domain. L-glutamine contacts are provided by residues 50 to 54 (RLAIV), 75 to 77 (NGE), and aspartate 98. The region spanning 210-450 (VRNTFEKAVI…LPKHILYRQK (241 aa)) is the Asparagine synthetase domain. Residues leucine 231, isoleucine 267, and 341 to 342 (SG) contribute to the ATP site. Positions 555-572 (GEDKTEDSRPEKLQKLAE) are enriched in basic and acidic residues. The interval 555-578 (GEDKTEDSRPEKLQKLAEKTPAIV) is disordered.

The catalysed reaction is L-aspartate + L-glutamine + ATP + H2O = L-asparagine + L-glutamate + AMP + diphosphate + H(+). Its pathway is amino-acid biosynthesis; L-asparagine biosynthesis. In terms of biological role, essential for nitrogen assimilation, distribution and remobilization within the plant via the phloem. This chain is Asparagine synthetase [glutamine-hydrolyzing] 3 (ASN3), found in Arabidopsis thaliana (Mouse-ear cress).